The sequence spans 152 residues: Flagellar assembly factor FliW (152 aa).

The protein belongs to the FliW family. As to quaternary structure, interacts with translational regulator CsrA and flagellin(s).

It is found in the cytoplasm. Acts as an anti-CsrA protein, binds CsrA and prevents it from repressing translation of its target genes, one of which is flagellin. Binds to flagellin and participates in the assembly of the flagellum. The sequence is that of Flagellar assembly factor FliW from Caldicellulosiruptor saccharolyticus (strain ATCC 43494 / DSM 8903 / Tp8T 6331).